Reading from the N-terminus, the 346-residue chain is Methylthioribose-1-phosphate isomerase (346 aa).

Substrate is bound by residues 46-48 (RGA), Arg89, and Gln196. The active-site Proton donor is Asp237. Position 247 to 248 (247 to 248 (NK)) interacts with substrate.

This sequence belongs to the eIF-2B alpha/beta/delta subunits family. MtnA subfamily.

It carries out the reaction 5-(methylsulfanyl)-alpha-D-ribose 1-phosphate = 5-(methylsulfanyl)-D-ribulose 1-phosphate. Its pathway is amino-acid biosynthesis; L-methionine biosynthesis via salvage pathway; L-methionine from S-methyl-5-thio-alpha-D-ribose 1-phosphate: step 1/6. In terms of biological role, catalyzes the interconversion of methylthioribose-1-phosphate (MTR-1-P) into methylthioribulose-1-phosphate (MTRu-1-P). This Trichlorobacter lovleyi (strain ATCC BAA-1151 / DSM 17278 / SZ) (Geobacter lovleyi) protein is Methylthioribose-1-phosphate isomerase.